We begin with the raw amino-acid sequence, 315 residues long: MAFMKQRSKTMRNLEKYKGVIPAFYACYDKEGNISPEGVQGLTKYFVKKGVKGVYVNGSSGECIYQSVEDRKIVLENVMKVAEGKLTVIAHVACNNTKDSQELARHAEGLGVDAIAAIPPIYFHLPEYAIAQYWNAISAAAPNTDFVIYNIPQLAGVALTQNLFVEMRKNPNVIGVKNSSMPVQDIQMFKQAAGAEYIIFNGPDEQFMSGRVIGAEGAIGGTYGAMPELYLKLDECINAGKMTEARKIQYACNEIIYKMCSAHGNMYAVIKAILKINEGLELGAVREPLPALVDEDMEIVKEAAQMICDAKKKFL.

Residues serine 59 and serine 60 each coordinate aceneuramate. Tyrosine 149 acts as the Proton donor in catalysis. Lysine 177 functions as the Schiff-base intermediate with substrate in the catalytic mechanism. The aceneuramate site is built by serine 179, glycine 202, aspartate 204, glutamate 205, and glycine 221.

This sequence belongs to the DapA family. NanA subfamily. As to quaternary structure, homotetramer.

The protein localises to the cytoplasm. The enzyme catalyses aceneuramate = aldehydo-N-acetyl-D-mannosamine + pyruvate. Its pathway is amino-sugar metabolism; N-acetylneuraminate degradation; D-fructose 6-phosphate from N-acetylneuraminate: step 1/5. Catalyzes the reversible aldol cleavage of N-acetylneuraminic acid (sialic acid; Neu5Ac) to form pyruvate and N-acetylmannosamine (ManNAc) via a Schiff base intermediate. Cannot use 2,7-anhydro-Neu5Ac. Involved in the degradation of sialic acid, which is present in the host mucus layer and represents a much-coveted source of nutrients for R.gnavus, a prevalent member of the normal gut microbiota. This chain is N-acetylneuraminate lyase, found in Mediterraneibacter gnavus (strain ATCC 29149 / DSM 114966 / JCM 6515 / VPI C7-9) (Ruminococcus gnavus).